The sequence spans 465 residues: MTGEIITIQVGQCGNHVGKYFWNQLLKEHGIDKDGYSKYNDDLTHIREDDTNPFFKQITNNRYVPRAIMIDLEPAAVTDVQSSFNDLFNPRNTWVSSEGLGAGNSWSTGYDRGVQNQDRIMDIIDRELDSTDNFEGFQLLHSVAGGTGSGLGSSLLEALTDRYSKSFITTYSVFPSKQSEVVVGPYNTVLTLRRLCEDADASIIFDNNALLNLTARTFRDPNTSYEHTNQLISSALSSITNSLRFPSYMYNSMASIFSTLIPTPELHFLTPNFTPFTPDYIIGGQRYKKNTAYDVLLDLLDPFNSLVTQRSDMVTHFNVFSTVIGEVDQNHILRALPKMQQRLNMPSWSTSALNVNIGRRSPYLPPLESRENSVSGLMLSNTSAITSVFERSASAFDKLFYKGAFLNQFESGQLFQNGLDEFVESREVITRMMEEYSNAEQDTYLDDILNEDDIMIGGFDNEGDS.

144–150 (AGGTGSG) contributes to the GTP binding site.

Belongs to the tubulin family.

It localises to the cytoplasm. It is found in the cytoskeleton. The protein resides in the microtubule organizing center. Its subcellular location is the spindle pole body. Its function is as follows. Tubulin is the major constituent of microtubules. The gamma chain is found at microtubule organizing centers (MTOC) such as the spindle poles or the centrosome, suggesting that it is involved in the minus-end nucleation of microtubule assembly. This is Tubulin gamma chain (TUB4) from Candida glabrata (strain ATCC 2001 / BCRC 20586 / JCM 3761 / NBRC 0622 / NRRL Y-65 / CBS 138) (Yeast).